A 315-amino-acid polypeptide reads, in one-letter code: tRNA pseudouridine synthase B (315 aa).

The active-site Nucleophile is Asp54.

This sequence belongs to the pseudouridine synthase TruB family. Type 1 subfamily.

It carries out the reaction uridine(55) in tRNA = pseudouridine(55) in tRNA. Functionally, responsible for synthesis of pseudouridine from uracil-55 in the psi GC loop of transfer RNAs. The protein is tRNA pseudouridine synthase B of Cupriavidus taiwanensis (strain DSM 17343 / BCRC 17206 / CCUG 44338 / CIP 107171 / LMG 19424 / R1) (Ralstonia taiwanensis (strain LMG 19424)).